Consider the following 819-residue polypeptide: Myosin light chain kinase 3 (819 aa).

Disordered regions lie at residues 146–256 (VPWR…TPSE), 273–334 (VVSP…TPPR), and 347–462 (EMLM…EQDC). S152 bears the Phosphoserine mark. 2 stretches are compositionally biased toward basic and acidic residues: residues 158 to 170 (EENK…EGGK) and 183 to 196 (DARE…KADV). Residues 307 to 318 (GPGPQCPGPPGL) show a composition bias toward pro residues. Phosphoserine occurs at positions 355, 401, and 408. The region spanning 515-770 (VCQHEVLGGG…ATQCLKHEWL (256 aa)) is the Protein kinase domain. ATP is bound by residues 521–529 (LGGGRFGQV) and K544. Catalysis depends on D636, which acts as the Proton acceptor.

The protein belongs to the protein kinase superfamily. CAMK Ser/Thr protein kinase family. The cofactor is Mg(2+). Post-translationally, phosphorylated on serine residues. As to expression, restricted to heart.

Its subcellular location is the cytoplasm. The catalysed reaction is L-seryl-[myosin light chain] + ATP = O-phospho-L-seryl-[myosin light chain] + ADP + H(+). It catalyses the reaction L-threonyl-[myosin light chain] + ATP = O-phospho-L-threonyl-[myosin light chain] + ADP + H(+). Kinase that phosphorylates MYL2 in vitro. Promotes sarcomere formation in cardiomyocytes and increases cardiomyocyte contractility. The protein is Myosin light chain kinase 3 (MYLK3) of Homo sapiens (Human).